Here is a 146-residue protein sequence, read N- to C-terminus: Large ribosomal subunit protein eL28 (146 aa).

The segment at 123–146 (VRAARKERSSKITFQRKAVRPKRH) is disordered.

The protein belongs to the eukaryotic ribosomal protein eL28 family.

The sequence is that of Large ribosomal subunit protein eL28 from Trypanosoma cruzi.